Reading from the N-terminus, the 150-residue chain is Transcriptional repressor NrdR (150 aa).

The segment at 3–34 (CPFCAFADSKVVDSRPDKGGSTIRRRRECESC) is a zinc-finger region. In terms of domain architecture, ATP-cone spans 49–139 (PLVIKKDGRR…VYRSFKDITE (91 aa)).

The protein belongs to the NrdR family. Zn(2+) serves as cofactor.

In terms of biological role, negatively regulates transcription of bacterial ribonucleotide reductase nrd genes and operons by binding to NrdR-boxes. In Geotalea uraniireducens (strain Rf4) (Geobacter uraniireducens), this protein is Transcriptional repressor NrdR.